The chain runs to 501 residues: Probable cytosol aminopeptidase (501 aa).

The Mn(2+) site is built by Lys267 and Asp272. Residue Lys279 is part of the active site. The Mn(2+) site is built by Asp290, Asp349, and Glu351. Arg353 is an active-site residue.

This sequence belongs to the peptidase M17 family. Mn(2+) serves as cofactor.

It is found in the cytoplasm. It catalyses the reaction Release of an N-terminal amino acid, Xaa-|-Yaa-, in which Xaa is preferably Leu, but may be other amino acids including Pro although not Arg or Lys, and Yaa may be Pro. Amino acid amides and methyl esters are also readily hydrolyzed, but rates on arylamides are exceedingly low.. The enzyme catalyses Release of an N-terminal amino acid, preferentially leucine, but not glutamic or aspartic acids.. Its function is as follows. Presumably involved in the processing and regular turnover of intracellular proteins. Catalyzes the removal of unsubstituted N-terminal amino acids from various peptides. This Hamiltonella defensa subsp. Acyrthosiphon pisum (strain 5AT) protein is Probable cytosol aminopeptidase.